The following is a 531-amino-acid chain: Efflux pump terG (531 aa).

Positions 1–11 (MSSSTLEGQET) are enriched in polar residues. The tract at residues 1 to 27 (MSSSTLEGQETASHHSKNSPSRHGDDG) is disordered. Transmembrane regions (helical) follow at residues 86–106 (GKLS…ILIG), 117–137 (AIFV…GVSV), 145–165 (ILAR…ALAI), 179–199 (FAWF…FGPL), 207–227 (WIYW…IVAI), 249–269 (IDLL…FAWN), 280–300 (YVYV…YVEL), 319–339 (FVFG…FYVI), 351–371 (IQMA…ALIV), 380–400 (ASSI…LMAL), 402–422 (PVHS…TFAM), 447–467 (SVIM…AGTI), and 488–508 (TLWF…IFLL).

This sequence belongs to the major facilitator superfamily.

Its subcellular location is the cell membrane. Efflux pump that might be required for efficient secretion of terrein or other secondary metabolies produced by the terrein genne cluster. The chain is Efflux pump terG from Aspergillus terreus (strain NIH 2624 / FGSC A1156).